The sequence spans 281 residues: ATP phosphoribosyltransferase (281 aa).

It belongs to the ATP phosphoribosyltransferase family. Long subfamily. Mg(2+) serves as cofactor.

The protein resides in the cytoplasm. The catalysed reaction is 1-(5-phospho-beta-D-ribosyl)-ATP + diphosphate = 5-phospho-alpha-D-ribose 1-diphosphate + ATP. It participates in amino-acid biosynthesis; L-histidine biosynthesis; L-histidine from 5-phospho-alpha-D-ribose 1-diphosphate: step 1/9. With respect to regulation, feedback inhibited by histidine. Its function is as follows. Catalyzes the condensation of ATP and 5-phosphoribose 1-diphosphate to form N'-(5'-phosphoribosyl)-ATP (PR-ATP). Has a crucial role in the pathway because the rate of histidine biosynthesis seems to be controlled primarily by regulation of HisG enzymatic activity. The polypeptide is ATP phosphoribosyltransferase (Salinispora tropica (strain ATCC BAA-916 / DSM 44818 / JCM 13857 / NBRC 105044 / CNB-440)).